A 76-amino-acid polypeptide reads, in one-letter code: UPF0270 protein PSPA7_1664 (76 aa).

Belongs to the UPF0270 family.

The protein is UPF0270 protein PSPA7_1664 of Pseudomonas paraeruginosa (strain DSM 24068 / PA7) (Pseudomonas aeruginosa (strain PA7)).